Here is a 197-residue protein sequence, read N- to C-terminus: Ribonuclease HII (197 aa).

The 191-residue stretch at 7-197 folds into the RNase H type-2 domain; the sequence is LGIAGVDEVG…SFLRKLFATV (191 aa). Residues D13, E14, and D109 each coordinate a divalent metal cation.

This sequence belongs to the RNase HII family. The cofactor is Mn(2+). Mg(2+) is required as a cofactor.

It localises to the cytoplasm. The enzyme catalyses Endonucleolytic cleavage to 5'-phosphomonoester.. Functionally, endonuclease that specifically degrades the RNA of RNA-DNA hybrids. The protein is Ribonuclease HII of Synechococcus sp. (strain CC9311).